Reading from the N-terminus, the 954-residue chain is Kinesin-like protein KIN-7A (954 aa).

The segment at 1-29 (MGVSRPPSTPASKIERTPMSTPTPGGSTR) is disordered. Positions 17–28 (TPMSTPTPGGST) are enriched in low complexity. Residues 34–354 (KIFVTVRVRP…LFFATCAKEV (321 aa)) form the Kinesin motor domain. 119–126 (GQTSSGKT) provides a ligand contact to ATP. 2 coiled-coil regions span residues 363 to 436 (VVSD…GDNQ) and 480 to 588 (LKHE…LVMS). Disordered stretches follow at residues 624–689 (PNLI…SSVN) and 741–762 (GKTN…DGPD). Positions 630–639 (PCSPLSSSRP) are enriched in low complexity. Basic and acidic residues-rich tracts occupy residues 640–660 (LEPE…EGSE) and 666–681 (KSED…ETPR).

It belongs to the TRAFAC class myosin-kinesin ATPase superfamily. Kinesin family. KIN-7 subfamily. In terms of tissue distribution, ubiquitous with a preferential expression in the shoot apical meristem (SAM).

In terms of biological role, may be essential to promote the progression of cytokinesis during node-internode differentiation. This Oryza sativa subsp. japonica (Rice) protein is Kinesin-like protein KIN-7A.